We begin with the raw amino-acid sequence, 101 residues long: Small ribosomal subunit protein uS14 (101 aa).

Belongs to the universal ribosomal protein uS14 family. In terms of assembly, part of the 30S ribosomal subunit. Contacts proteins S3 and S10.

Functionally, binds 16S rRNA, required for the assembly of 30S particles and may also be responsible for determining the conformation of the 16S rRNA at the A site. This chain is Small ribosomal subunit protein uS14, found in Shewanella oneidensis (strain ATCC 700550 / JCM 31522 / CIP 106686 / LMG 19005 / NCIMB 14063 / MR-1).